Reading from the N-terminus, the 233-residue chain is Large ribosomal subunit protein uL3 (233 aa).

It belongs to the universal ribosomal protein uL3 family. Part of the 50S ribosomal subunit. Forms a cluster with proteins L14 and L19.

One of the primary rRNA binding proteins, it binds directly near the 3'-end of the 23S rRNA, where it nucleates assembly of the 50S subunit. This Ureaplasma parvum serovar 3 (strain ATCC 27815 / 27 / NCTC 11736) protein is Large ribosomal subunit protein uL3.